We begin with the raw amino-acid sequence, 545 residues long: Calcium-dependent protein kinase 10 (545 aa).

The tract at residues 1 to 36 (MGNCNACVRPDSKESKPSSKPKKPNRDRKLNPFAGD) is disordered. Gly-2 carries the N-myristoyl glycine lipid modification. Positions 63 to 321 (YILGRELGRG…AQQVLAHPWI (259 aa)) constitute a Protein kinase domain. ATP is bound by residues 69 to 77 (LGRGEFGIT) and Lys-92. The active-site Proton acceptor is Asp-187. A Phosphoserine modification is found at Ser-227. The segment at 327–357 (APNVPLGDIVRSRLKQFSMMNRFKKKVLRVI) is autoinhibitory domain. EF-hand domains are found at residues 364-399 (QEVE…VGSQ), 400-435 (LGEP…LQKI), 436-471 (ENDE…ELGE), and 472-507 (PDAS…GTDW). Residues Asp-377, Asp-379, Asp-381, Lys-383, Glu-388, Asp-413, Asp-415, Asn-417, Glu-424, Asp-449, Asp-451, Ser-453, Tyr-455, Glu-460, Asp-485, Asp-487, Asp-489, Arg-491, and Glu-496 each coordinate Ca(2+).

The protein belongs to the protein kinase superfamily. Ser/Thr protein kinase family. CDPK subfamily.

The protein resides in the membrane. The catalysed reaction is L-seryl-[protein] + ATP = O-phospho-L-seryl-[protein] + ADP + H(+). It carries out the reaction L-threonyl-[protein] + ATP = O-phospho-L-threonyl-[protein] + ADP + H(+). Activated by calcium. Autophosphorylation may play an important role in the regulation of the kinase activity. May play a role in signal transduction pathways that involve calcium as a second messenger. May be a positive regulator controlling stress signal transduction. The protein is Calcium-dependent protein kinase 10 (CPK10) of Arabidopsis thaliana (Mouse-ear cress).